Here is a 397-residue protein sequence, read N- to C-terminus: Elongation factor Tu (397 aa).

The tr-type G domain maps to 10-206; that stretch reads KPHCNIGTIG…AVDTWIPDPQ (197 aa). The G1 stretch occupies residues 19-26; sequence GHVDHGKT. 19 to 26 provides a ligand contact to GTP; sequence GHVDHGKT. Residue threonine 26 coordinates Mg(2+). The interval 61 to 65 is G2; the sequence is GITIS. The tract at residues 82 to 85 is G3; that stretch reads DCPG. Residues 82–86 and 137–140 each bind GTP; these read DCPGH and NKCD. The G4 stretch occupies residues 137-140; the sequence is NKCD. Residues 175 to 177 are G5; sequence SAL.

Belongs to the TRAFAC class translation factor GTPase superfamily. Classic translation factor GTPase family. EF-Tu/EF-1A subfamily. In terms of assembly, monomer.

The protein localises to the cytoplasm. The catalysed reaction is GTP + H2O = GDP + phosphate + H(+). In terms of biological role, GTP hydrolase that promotes the GTP-dependent binding of aminoacyl-tRNA to the A-site of ribosomes during protein biosynthesis. This chain is Elongation factor Tu, found in Lachnoclostridium phytofermentans (strain ATCC 700394 / DSM 18823 / ISDg) (Clostridium phytofermentans).